Here is a 328-residue protein sequence, read N- to C-terminus: Putative HTH-type transcriptional regulatory protein MA_3524 (328 aa).

One can recognise an HTH cro/C1-type domain in the interval 132-190 (LKKARTDQSMSLGTLASMVGVSRRTISKYEEEGMDASIDVVLQLEDIFGVELARPIDIL). The H-T-H motif DNA-binding region spans 143–162 (LGTLASMVGVSRRTISKYEE).

The sequence is that of Putative HTH-type transcriptional regulatory protein MA_3524 from Methanosarcina acetivorans (strain ATCC 35395 / DSM 2834 / JCM 12185 / C2A).